A 218-amino-acid polypeptide reads, in one-letter code: Small ribosomal subunit protein uS3c (218 aa).

The 72-residue stretch at 47-118 (VQKNIRISSG…KLNIAITRIS (72 aa)) folds into the KH type-2 domain.

Belongs to the universal ribosomal protein uS3 family. In terms of assembly, part of the 30S ribosomal subunit.

It localises to the plastid. It is found in the chloroplast. This chain is Small ribosomal subunit protein uS3c (rps3), found in Barbarea verna (Land cress).